The following is a 304-amino-acid chain: Recombination-associated protein RdgC (304 aa).

Belongs to the RdgC family.

The protein resides in the cytoplasm. It is found in the nucleoid. May be involved in recombination. The chain is Recombination-associated protein RdgC from Dechloromonas aromatica (strain RCB).